The following is a 102-amino-acid chain: NADH-quinone oxidoreductase subunit K (102 aa).

3 consecutive transmembrane segments (helical) span residues 5 to 25 (IMHY…GIFL), 31 to 51 (IIIL…FVAF), and 66 to 86 (FILT…VVFF).

Belongs to the complex I subunit 4L family. As to quaternary structure, NDH-1 is composed of 14 different subunits. Subunits NuoA, H, J, K, L, M, N constitute the membrane sector of the complex.

It is found in the cell inner membrane. The catalysed reaction is a quinone + NADH + 5 H(+)(in) = a quinol + NAD(+) + 4 H(+)(out). Functionally, NDH-1 shuttles electrons from NADH, via FMN and iron-sulfur (Fe-S) centers, to quinones in the respiratory chain. The immediate electron acceptor for the enzyme in this species is believed to be ubiquinone. Couples the redox reaction to proton translocation (for every two electrons transferred, four hydrogen ions are translocated across the cytoplasmic membrane), and thus conserves the redox energy in a proton gradient. The protein is NADH-quinone oxidoreductase subunit K of Bartonella henselae (strain ATCC 49882 / DSM 28221 / CCUG 30454 / Houston 1) (Rochalimaea henselae).